The sequence spans 102 residues: MNIAEYHQNIEQVWLQIEEQLEEQGCDVDCDTQGSVFTITFADRSQIVVNKQEPLLELWLASKAGGFHFAFKNNQWIAQDGKLFWQCLEQACLAHGEQVNFS.

It belongs to the frataxin family.

Involved in iron-sulfur (Fe-S) cluster assembly. May act as a regulator of Fe-S biogenesis. The protein is Iron-sulfur cluster assembly protein CyaY of Histophilus somni (strain 2336) (Haemophilus somnus).